The following is a 160-amino-acid chain: Transcription elongation factor GreA (160 aa).

A coiled-coil region spans residues 2–84 (KNTVNDKILL…SKAKIIKADL (83 aa)).

It belongs to the GreA/GreB family.

Its function is as follows. Necessary for efficient RNA polymerase transcription elongation past template-encoded arresting sites. The arresting sites in DNA have the property of trapping a certain fraction of elongating RNA polymerases that pass through, resulting in locked ternary complexes. Cleavage of the nascent transcript by cleavage factors such as GreA or GreB allows the resumption of elongation from the new 3'terminus. GreA releases sequences of 2 to 3 nucleotides. This Mesomycoplasma hyopneumoniae (strain 232) (Mycoplasma hyopneumoniae) protein is Transcription elongation factor GreA.